The sequence spans 242 residues: Proteasome subunit beta type-4 (242 aa).

Positions 1–23 (ESVARGTAPGELHCFPGAGPVRH) are excised as a propeptide. Threonine 24 functions as the Nucleophile in the catalytic mechanism.

It belongs to the peptidase T1B family. The 26S proteasome consists of a 20S proteasome core and two 19S regulatory subunits. The 20S proteasome core is composed of 28 subunits that are arranged in four stacked rings, resulting in a barrel-shaped structure. The two end rings are each formed by seven alpha subunits, and the two central rings are each formed by seven beta subunits. The catalytic chamber with the active sites is on the inside of the barrel.

It localises to the cytoplasm. The protein localises to the nucleus. Non-catalytic component of the proteasome, a multicatalytic proteinase complex which is characterized by its ability to cleave peptides with Arg, Phe, Tyr, Leu, and Glu adjacent to the leaving group at neutral or slightly basic pH. The proteasome has an ATP-dependent proteolytic activity. This Xenopus laevis (African clawed frog) protein is Proteasome subunit beta type-4 (psmb4).